A 354-amino-acid polypeptide reads, in one-letter code: MACCLSEEAKEQKRINQEIEKQLRRDKRDARRELKLLLLGTGESGKSTFIKQMRIIHGSGYSEEDRKGFEKIVYQNIFSAIQTLIAAMETLSLEYKDPSNNEHAEFLNSIDADSADIFEDGHVTAIKGCWTDPGMQECYDRRREYQLTDSAKYYLDDVERIHEPGYIPTLQDILRVRVPTTGIIEYPFDLYSIIFRMVDVGGQRSERRKWIHCFENVTSIMFLVALSEYDQVLVESDNEENRMEESKALFRTIITYPWFQNSSVILFLNKKDLLEEKIMTSHLADYFPDYDGPKCDYEAAREFMMDSYMDLNEDKEKMLYYHYTCATDTENIRFVFAAVKDTILQLNLKEYNLV.

Residues Cys3 and Cys4 are each lipidated (S-palmitoyl cysteine). The G-alpha domain maps to 32–354 (RELKLLLLGT…QLNLKEYNLV (323 aa)). Positions 35–48 (KLLLLGTGESGKST) are G1 motif. GTP-binding positions include 40 to 47 (GTGESGKS), 174 to 180 (LRVRVPT), 199 to 203 (DVGGQ), 269 to 272 (NKKD), and Ala326. Mg(2+)-binding residues include Ser47 and Thr180. A G2 motif region spans residues 172 to 180 (DILRVRVPT). The G3 motif stretch occupies residues 195–204 (FRMVDVGGQR). Residues 265 to 272 (ILFLNKKD) are G4 motif. The tract at residues 324-329 (TCATDT) is G5 motif.

Belongs to the G-alpha family. G(q) subfamily. G proteins are composed of 3 units; alpha, beta and gamma. The alpha chain contains the guanine nucleotide binding site. As to expression, a high concentration was found in the retinal light-sensitive outer segment.

Its function is as follows. Guanine nucleotide-binding proteins (G proteins) are involved as modulators or transducers in various transmembrane signaling systems. The G(q) alpha subunit is involved in the light-dependent activation of phospholipase C. In Loligo forbesii (Veined squid), this protein is Guanine nucleotide-binding protein G(q) subunit alpha.